Consider the following 79-residue polypeptide: Moronecidin (79 aa).

A signal peptide spans 1–22 (MKCATLFLVLSMVVLMAEPGDA). The residue at position 44 (Gly44) is a Glycine amide. A disordered region spans residues 45-79 (GKAEQDQQDQQYQQEQQEQQAQQYQRFNRERAAFD). The propeptide occupies 47–79 (AEQDQQDQQYQQEQQEQQAQQYQRFNRERAAFD). Positions 52–69 (QDQQYQQEQQEQQAQQYQ) are enriched in low complexity.

Expressed in mast cells in gill, skin and gut, and in lining blood vessels in the viscera. Also in intestine, spleen, anterior kidney, and blood cells.

It localises to the secreted. Antimicrobial peptide with broad-spectrum activity against Gram-positive and Gram-negative bacteria as well as against a variety of fungi. Rapidly inactivates channel catfish herpesvirus (ED(50)=4 uM) and frog virus 3 (ED(50)=13 uM) over a wide temperature range. Seems to disrupt the membranes by adopting an alpha helical conformation and forming toroidal pores. Has hemolytic activity. The protein is Moronecidin of Morone saxatilis (Striped bass).